We begin with the raw amino-acid sequence, 464 residues long: GDNF family receptor alpha-2 (464 aa).

Residues 1-21 (MILANAFCLFFFLDETLRSLA) form the signal peptide. 14 disulfide bridges follow: Cys40-Cys93, Cys47-Cys53, Cys63-Cys78, Cys95-Cys105, Cys161-Cys222, Cys168-Cys174, Cys185-Cys200, Cys195-Cys241, Cys224-Cys229, Cys251-Cys323, Cys258-Cys264, Cys275-Cys293, Cys285-Cys347, and Cys325-Cys335. Asn52 carries N-linked (GlcNAc...) asparagine glycosylation. Asn357 carries an N-linked (GlcNAc...) asparagine glycan. Residues 363–392 (MSPKGPTFSATQAPRVEKTPSLPDDLSDST) are disordered. The span at 381 to 392 (TPSLPDDLSDST) shows a compositional bias: low complexity. The N-linked (GlcNAc...) asparagine glycan is linked to Asn413. Ser443 carries the GPI-anchor amidated serine lipid modification. The propeptide at 444–464 (CRARLSTALTALPLLMVTLAQ) is removed in mature form.

This sequence belongs to the GDNFR family. Interacts with NRTN ligand and RET: forms a 2:2:2 ternary complex composed of NRTN ligand, GFRA2 and RET receptor. Also forms a 4:4:4 tetrameric complex composed of 4 copies of NRTN ligand, GFRA2 and RET receptor, which prevents endocytosis of RET. Interacts with SORL1. Neurons of the superior cervical and dorsal root ganglia, and adult brain and testis. Low level in the substantia nigra, spleen and adrenal gland. Isoform 1, isoform 2 and isoform 3 are all expressed in brain, liver, ileum, spleen, heart and kidney. In brain, isoform 1 is most abundant, isoform 2 slightly less and isoform 3 is lowest. No significant levels of isoform 1, isoform 2 or isoform 3 expression in testis.

The protein localises to the cell membrane. Its function is as follows. Receptor for neurturin (NRTN), a growth factor that supports the survival of sympathetic neurons. NRTN-binding leads to autophosphorylation and activation of the RET receptor. Also able to mediate GDNF signaling through the RET tyrosine kinase receptor. In terms of biological role, participates in NRTN-induced 'Ser-727' phosphorylation of STAT3. This Mus musculus (Mouse) protein is GDNF family receptor alpha-2.